We begin with the raw amino-acid sequence, 932 residues long: Chitin synthase regulatory factor 3 (932 aa).

Over residues 1 to 16 (MKDSHSSRRKYEKEKL) the composition is skewed to basic and acidic residues. Disordered regions lie at residues 1 to 53 (MKDS…PTSR), 264 to 356 (TLEE…LQQP), and 374 to 406 (EVPAPTFDRRNVSRNSNNNSPEGYDNNRTNPTV). Composition is skewed to polar residues over residues 35–53 (SGNTASSSSPTLQFRPTSR), 274–285 (DSITNTVSNASS), and 308–319 (SHFSSTDSNTDS). Residues 337 to 349 (KSSETLKNPRNDD) show a composition bias toward basic and acidic residues. Ser393 carries the phosphoserine modification. Sel1-like repeat units lie at residues 638 to 674 (PEALFLIGQFHSQGVLGFRRDLGKAFELYSLAAKKGH), 675 to 710 (PLSNYRVAVCLQTGTGVKPDTSKCVAIYKKAAEMDV), 711 to 747 (VEAMFRIALIYLNGLLGQKRNISLGVQWLERACKSKG), 751 to 788 (VRAMYELAKIYEQPDRYGVSATPERKFELYKQSAVYGY), 789 to 825 (AAAQCKLGECYEHGLLGCLAEPRRSIFWYTRAAEQDY), 826 to 863 (GEAELGLSGWYLTGSEGILPKNGEEALLWAHKAACKGL), and 864 to 899 (AKAQYAVGFMMEQGIGVAADPSSAHNWYIRAAKQGF). The tract at residues 905–932 (RLEEQALSSKQTHSKAPKKKQQEQCVVM) is disordered.

This is Chitin synthase regulatory factor 3 (chr3) from Schizosaccharomyces pombe (strain 972 / ATCC 24843) (Fission yeast).